Reading from the N-terminus, the 361-residue chain is Large-conductance mechanosensitive channel MscMJLR (361 aa).

A run of 5 helical transmembrane segments spans residues I20 to I40, L65 to L85, L89 to F109, I137 to I157, and L177 to L197.

The protein belongs to the MscS (TC 1.A.23) family.

The protein resides in the cell membrane. Large-conductance mechanosensitive channel that opens in response to stretch forces in the membrane lipid bilayer. Selective for cations. Rectifies with voltage. The sequence is that of Large-conductance mechanosensitive channel MscMJLR from Methanocaldococcus jannaschii (strain ATCC 43067 / DSM 2661 / JAL-1 / JCM 10045 / NBRC 100440) (Methanococcus jannaschii).